Consider the following 529-residue polypeptide: BTB/POZ domain-containing protein 6 (529 aa).

Positions 127–197 (ADVHFIVGPA…LYSDEIDLEA (71 aa)) constitute a BTB domain.

Homodimer and heterodimer. Interacts with cul3 via the BTB domain.

It is found in the cytoplasm. Adapter protein for the cul3 E3 ubiquitin-protein ligase complex. Involved in late neuronal development and muscle formation. The polypeptide is BTB/POZ domain-containing protein 6 (btbd6) (Xenopus tropicalis (Western clawed frog)).